Reading from the N-terminus, the 281-residue chain is Ribosomal protein L11 methyltransferase (281 aa).

The S-adenosyl-L-methionine site is built by threonine 133, glycine 154, aspartate 175, and asparagine 216.

This sequence belongs to the methyltransferase superfamily. PrmA family.

The protein resides in the cytoplasm. The enzyme catalyses L-lysyl-[protein] + 3 S-adenosyl-L-methionine = N(6),N(6),N(6)-trimethyl-L-lysyl-[protein] + 3 S-adenosyl-L-homocysteine + 3 H(+). Functionally, methylates ribosomal protein L11. In Campylobacter jejuni subsp. jejuni serotype O:2 (strain ATCC 700819 / NCTC 11168), this protein is Ribosomal protein L11 methyltransferase.